The sequence spans 694 residues: Lon-like protease BrxL (694 aa).

The protein belongs to the BrxL family.

Its function is as follows. BREX systems (bacteriophage exclusion) provide immunity against bacteriophage. Part of a type 1 BREX system which protects against dsDNA phage. This system allows phage adsorption but prevents phage DNA replication, without degradation of the phage DNA. Methylation of bacterial DNA by PglX guides self/non-self discrimination. When the brxA-brxB-brxC-pglX-pglZ-brxL genes are transformed into a susceptible E.coli strain (BW25113) they confer very high resistance to infection by bacteriophage VR7 and VpaE1, about 100-fold protection against lambda, T5 and T7 and no protection against RNA phage Qbeta, ssDNA phage M13 or dSDNA phage T4 and VR5. Glycosylated phage DNA is not susceptible to BREX. The BREX system does not confer resistance to lysogenic lambda phage, i.e. prophage that are integrated into the chromosomal DNA and then induced to form phage. Expression of this protein alone is toxic. The sequence is that of Lon-like protease BrxL from Escherichia coli O9:H4 (strain HS).